A 41-amino-acid chain; its full sequence is Alpha-conotoxin-like Pu1.2 (41 aa).

The propeptide occupies 1–21; the sequence is LDGRNAAADFETSDLLAMTIR. Cystine bridges form between C24-C30 and C25-C37. C37 is modified (cysteine amide). A propeptide spanning residues 38–41 is cleaved from the precursor; it reads GGKR.

It belongs to the conotoxin A superfamily. Post-translationally, non-native isomers 'ribbon' (with disulfide connectivity C1-C4, C2-C3) and 'beads' (with disulfide connectivity C1-C2, C3-C4) also inhibit high voltage-activated (HVA) calcium channel currents in rat DRG neurons (25-30% inhibition at 1 uM toxin). Mutants Pu1.2(9-16), [C3S; C9S]Pu1.2 and [C4S]Pu1.2(1-9) are all C-terminally amidated. In terms of tissue distribution, expressed by the venom duct.

It is found in the secreted. Alpha-conotoxins act on postsynaptic membranes, they bind to the nicotinic acetylcholine receptors (nAChR) and thus inhibit them. This toxin also inhibits high voltage-activated (HVA) calcium channel currents in rat DRG neurons (27% inhibition at 1 uM toxin) probably by activating GABA(B) receptors (GABBR1 and/or GABBR2). This chain is Alpha-conotoxin-like Pu1.2, found in Conus pulicarius (Flea-bitten cone).